We begin with the raw amino-acid sequence, 1399 residues long: DNA-directed RNA polymerase subunit beta' (1399 aa).

Zn(2+) contacts are provided by Cys71, Cys73, Cys86, and Cys89. Asp462, Asp464, and Asp466 together coordinate Mg(2+). Residues Cys810, Cys884, Cys891, and Cys894 each contribute to the Zn(2+) site. Residues 1379–1399 (KQAAIVPSQPEPQPLALPPAE) form a disordered region. The span at 1387–1399 (QPEPQPLALPPAE) shows a compositional bias: pro residues.

Belongs to the RNA polymerase beta' chain family. As to quaternary structure, the RNAP catalytic core consists of 2 alpha, 1 beta, 1 beta' and 1 omega subunit. When a sigma factor is associated with the core the holoenzyme is formed, which can initiate transcription. It depends on Mg(2+) as a cofactor. Zn(2+) serves as cofactor.

It carries out the reaction RNA(n) + a ribonucleoside 5'-triphosphate = RNA(n+1) + diphosphate. Functionally, DNA-dependent RNA polymerase catalyzes the transcription of DNA into RNA using the four ribonucleoside triphosphates as substrates. This is DNA-directed RNA polymerase subunit beta' from Bradyrhizobium sp. (strain ORS 278).